A 735-amino-acid polypeptide reads, in one-letter code: MAVPTIPSPACISQSANGSIISTRRSTETNPRQHPSTSYRCAGRVVRRQGRSAISRSGSRYLHDLEAGRSLLKRVTLRRDWDSRLDEKDQYPRLGARAAATFEAKPENAEKDYSKNGKAANKGVDNGKDRLAKVPISNIRNFSIIAHIDHGKSTLADKLLQTTGTVLAREMKEQFLDNMDLERERGITIKLQAARMRYVDETGEAYCLNLIDTPGHVDFSYEVSRSLAACEGALLVVDASQGVEAQTLANVYLALESNLEIIPVLNKIDLPGADPERVRREIEEIIGLDCSEAILCSAKEGVGIPEILNAVVKKIPPPKDTAAEPLRALIFDSYYDSYRGVVVYFRVMDGRVKKGDYVQFMNSKTEYQVDEVGVLSPIQMPVNELYAGEVGYLSASIKSVADARVGDTITTVSRKAAQALPGYQLATPMVFCGLFPIDADQFVELREALEKLQLNDAALQFEPETSSAMGFGFRCGFLGLLHMEIVQERLEREYGLDLITTAPSVVYRVHCTDGTITECSNPSALPDAGKRKSIEEPYVRIELLTPKDYIGPLMELAQERRGEFKEMKFITENRASLVYMLPLGEMVGDFFDQLKSRSKGYASMEYSVKGYRESKLVKLDIRINDEAVDPLAVIVHQDKAYSVGRALTQQLKKLIPRQLFKIPIQACIGSKVIASENIAAMRKDVLAKCYGGDISRKKKLLKKQAEGKKRMKSLGRVDVPQDAFMAILRLEKEVV.

2 disordered regions span residues 1–38 (MAVP…PSTS) and 106–126 (PENA…GVDN). A chloroplast-targeting transit peptide spans 1-47 (MAVPTIPSPACISQSANGSIISTRRSTETNPRQHPSTSYRCAGRVVR). Positions 11–38 (CISQSANGSIISTRRSTETNPRQHPSTS) are enriched in polar residues. Basic and acidic residues predominate over residues 106 to 115 (PENAEKDYSK). The region spanning 137–319 (SNIRNFSIIA…AVVKKIPPPK (183 aa)) is the tr-type G domain. Residues 146–153 (AHIDHGKS), 212–216 (DTPGH), and 266–269 (NKID) contribute to the GTP site.

This sequence belongs to the TRAFAC class translation factor GTPase superfamily. Classic translation factor GTPase family. LepA subfamily.

Its subcellular location is the plastid. The protein resides in the chloroplast. It carries out the reaction GTP + H2O = GDP + phosphate + H(+). In terms of biological role, promotes chloroplast protein synthesis. May act as a fidelity factor of the translation reaction, by catalyzing a one-codon backward translocation of tRNAs on improperly translocated ribosomes. The sequence is that of Translation factor GUF1 homolog, chloroplastic from Physcomitrium patens (Spreading-leaved earth moss).